We begin with the raw amino-acid sequence, 428 residues long: Putative oxidoreductase YteT (428 aa).

An N-terminal signal peptide occupies residues 1-23 (MKNIVFCGLSSRAFSMFIKPLME).

This sequence belongs to the Gfo/Idh/MocA family.

In terms of biological role, may play a role in the degradation of type I rhamnogalacturonan derived from plant cell walls. The polypeptide is Putative oxidoreductase YteT (yteT) (Bacillus subtilis (strain 168)).